Here is a 773-residue protein sequence, read N- to C-terminus: Disintegrin and metalloproteinase domain-containing protein 11 (773 aa).

Residues 1 to 24 form the signal peptide; sequence MRRLRRWAIAALLLLPLLPPPGLG. Positions 25-229 are excised as a propeptide; the sequence is ALGPRGALHW…PNWPKLRRKR (205 aa). A disordered region spans residues 36–82; the sequence is SSAHVGSPESPEGSEVTEPSRLVRQSSGGEVRKPQLDTRVRQDPPRG. The segment covering 65 to 79 has biased composition (basic and acidic residues); that stretch reads EVRKPQLDTRVRQDP. N-linked (GlcNAc...) asparagine glycans are attached at residues Asn-100 and Asn-167. At 230–738 the chain is on the extracellular side; the sequence is QVRRGHPTVH…ERYKGPSGTN (509 aa). One can recognise a Peptidase M12B domain in the interval 243–442; it reads KYVELIVIND…GGGSCLFNKP (200 aa). A required for localization to cerebellar cortex basket cell terminals. Also required for localization of KCNA1, KCNA2, DLG4 and ADAM22 to cerebellar cortex basket cell terminal perisomatic axons and pinceaux region spans residues 336-773; it reads GRTFQSTSSG…NIRRGRSGGA (438 aa). 4 disulfide bridges follow: Cys-353–Cys-437, Cys-396–Cys-421, Cys-398–Cys-405, and Cys-507–Cys-527. The Disintegrin domain occupies 448 to 535; sequence PPECGNGFVE…QCPPNLHKLD (88 aa). Residues Asn-609 and Asn-677 are each glycosylated (N-linked (GlcNAc...) asparagine). Cystine bridges form between Cys-681–Cys-696, Cys-690–Cys-702, and Cys-704–Cys-713. Positions 681–713 constitute an EGF-like domain; it reads CPGSGERRICSHHGVCSNEGKCICQPDWTGKDC. A helical membrane pass occupies residues 739–759; sequence IIIGSIAGAVLVAAIVLGGTG. Residues 760-773 lie on the Cytoplasmic side of the membrane; that stretch reads WGFKNIRRGRSGGA.

In terms of assembly, interacts with LGI1 and LGI4. Interacts with KCNA1/KV1.1, KCNA2/KV1.2, DLG4/PSD-95 and ADAM22. In terms of processing, the precursor is cleaved by a furin endopeptidase. As to expression, abundantly expressed in cerebellar cortex basket cell terminals and pinceaux, weakly expressed in Purkinje cells (at protein level). Weakly expressed in the heart. Abundantly in expressed in neurons throughout the central nervous system including the telencephalon, diencephalic and brainstem nuclei, cerebellum and spinal cord. Expressed in the peripheral nervous system trigeminal and dorsal root ganglia. Expressed in the ganglion and bipolar cells of the retinae and weakly in the cornea of the eyes. Expressed in the hepatocytes of the parenchyma and hepatic lobules of the liver. Expressed in distinct focal areas in the juxtamedullary cortex of the kidney. Expressed in spermatocytes in the seminiferous tubules of the testes. Expressed in the stratum spinosum of the stratified squamous epithelia of the tongue and esophagus.

It localises to the presynaptic cell membrane. The protein localises to the perikaryon. The protein resides in the cell projection. It is found in the axon. In terms of biological role, probable ligand for integrin in the brain. This is a non catalytic metalloprotease-like protein. Required for localization of the potassium channel subunit proteins KCNA1/KV1.1 and KCNA2/KV1.2 at cerebellar cortex basket cell distal terminals, is thereby involved in ephaptic inhibitory synchronization of Purkinje cell firing and response to stress. Plays a role in spatial learning and motor coordination. Involved in the nociceptive pain response to chemical-derived stimulation. In Mus musculus (Mouse), this protein is Disintegrin and metalloproteinase domain-containing protein 11 (Adam11).